The chain runs to 375 residues: B3 domain-containing protein REM-like 2 (375 aa).

3 DNA-binding regions (TF-B3) span residues 51 to 147, 131 to 226, and 277 to 375; these read SFVA…KRLY, FVTV…YGTN, and RLVI…KSGK.

It is found in the nucleus. The sequence is that of B3 domain-containing protein REM-like 2 from Arabidopsis thaliana (Mouse-ear cress).